The primary structure comprises 197 residues: Adenylate kinase (197 aa).

Residue 7-15 coordinates ATP; sequence ALPGSGKTT.

This sequence belongs to the archaeal adenylate kinase family.

The protein localises to the cytoplasm. It carries out the reaction AMP + ATP = 2 ADP. The protein is Adenylate kinase (adkA) of Pyrobaculum aerophilum (strain ATCC 51768 / DSM 7523 / JCM 9630 / CIP 104966 / NBRC 100827 / IM2).